A 198-amino-acid polypeptide reads, in one-letter code: Suppressor of cytokine signaling 2 (198 aa).

The segment at 1 to 29 is disordered; the sequence is MTLRCLEPSGNGADRTRSQWGTAGLPEEQ. Positions 1 to 75 are interaction with AREL1; it reads MTLRCLEPSG…PEGTFLIRDS (75 aa). At S30 the chain carries Phosphoserine. The region spanning 48-156 is the SH2 domain; the sequence is WYWGSMTVNE…TVHLYLTKPL (109 aa). Position 52 is a phosphoserine; by PKC (S52). Positions 151 to 197 constitute an SOCS box domain; the sequence is YLTKPLYTSAPTLQHFCRLAINKCTGTIWGLPLPTRLKDYLEEYKFQ. K173 participates in a covalent cross-link: Glycyl lysine isopeptide (Lys-Gly) (interchain with G-Cter in ubiquitin).

In terms of assembly, substrate-recognition component of the ECS(SOCS2) complex, composed of SOCS2, CUL5, ELOB, ELOC and RNF7/RBX2. Interacts with IGF1R. Interacts with DCUN1D1. In terms of processing, ubiquitinated; mediated by AREL1 and leading to its subsequent proteasomal degradation. Ubiquitination is dependent on phosphorylation at Ser-52, by PKC and is stimulated by LPS. Post-translationally, phosphorylation at Ser-52 by PKC facilitates its ubiquitination and proteasomal degradation. As to expression, expressed primarily in the testis, some expression in liver and lung.

Its subcellular location is the cytoplasm. Its pathway is protein modification; protein ubiquitination. Its function is as follows. Substrate-recognition component of a cullin-5-RING E3 ubiquitin-protein ligase complex (ECS complex, also named CRL5 complex), which mediates the ubiquitination and subsequent proteasomal degradation of target proteins, such as EPOR and GHR. Specifically recognizes and binds phosphorylated proteins via its SH2 domain, promoting their ubiquitination. The ECS(SOCS2) complex acts as a key regulator of growth hormone receptor (GHR) levels by mediating ubiquitination and degradation of GHR, following GHR phosphorylation by JAK2. The ECS(SOCS2) also catalyzes ubiquitination and degradation of JAK2-phosphorylated EPOR. This chain is Suppressor of cytokine signaling 2, found in Mus musculus (Mouse).